The chain runs to 726 residues: Cyclin-T1 (726 aa).

A Phosphoserine modification is found at serine 117. The short motif at 253–270 is the Nuclear localization signal, and interaction with Tat-TAR RNA element; it reads KRIWNWRACEAAKKTKAD. The residue at position 340 (serine 340) is a Phosphoserine. Lysine 342 is covalently cross-linked (Glycyl lysine isopeptide (Lys-Gly) (interchain with G-Cter in SUMO2)). Residues 360–385 are disordered; the sequence is VDHSLPQDGSNAFISQKQNSKSVPSA. Residues 366–382 show a composition bias toward polar residues; the sequence is QDGSNAFISQKQNSKSV. The stretch at 384–425 forms a coiled coil; sequence SAKVSLKEYRAKHAEELAAQKRQLENMEANVKSQYAYAAQNL. Serine 388 carries the post-translational modification Phosphoserine. Lysine 390 carries the post-translational modification N6-acetyllysine. Lysine 415 participates in a covalent cross-link: Glycyl lysine isopeptide (Lys-Gly) (interchain with G-Cter in SUMO2). ADP-ribosylserine is present on residues serine 416, serine 474, and serine 475. Residues 480-550 form a histidine-rich domain (HRD) region; sequence IKMRIKVHAA…RPGDPKHSSQ (71 aa). Lysine 481 participates in a covalent cross-link: Glycyl lysine isopeptide (Lys-Gly) (interchain with G-Cter in SUMO2). Position 485 is an N6-(ADP-ribosyl)lysine (lysine 485). The residue at position 487 (histidine 487) is an ADP-ribosylhistidine. Over residues 487–506 the composition is skewed to basic and acidic residues; the sequence is HAAADKHNSVEDSVTKSREH. Disordered stretches follow at residues 487–650 and 688–726; these read HAAA…NGHN and SDYL…PLPK. A phosphoserine mark is found at serine 495 and serine 499. A compositionally biased stretch (basic residues) spans 507–530; that stretch reads KEKHKTHPSNHHHHHNHHSHKHSH. The required for interaction with ZMYND8 stretch occupies residues 527 to 570; the sequence is KHSHSQLPVGTGNKRPGDPKHSSQTSNLAHKTYSLSSSFSSSSS. Histidine 530 is subject to ADP-ribosylhistidine. ADP-ribosylserine is present on residues serine 531, serine 549, and serine 552. Histidine 556 is subject to ADP-ribosylhistidine. A compositionally biased stretch (low complexity) spans 560–570; it reads SLSSSFSSSSS. At serine 563 the chain carries ADP-ribosylserine. 2 positions are modified to phosphoserine: serine 564 and serine 577. Positions 594–609 are enriched in low complexity; that stretch reads STKSSSLNFSFPSLPT. Over residues 615 to 630 the composition is skewed to polar residues; sequence GHSSDTSGLSFSQPSC. An ADP-ribosylserine modification is found at serine 637. The span at 710–726 shows a compositional bias: pro residues; sequence PPPLPSEPPPPLPPLPK.

The protein belongs to the cyclin family. Cyclin C subfamily. Cyclin-T1 is the predominant cyclin that associates with CDK9 to form a heterodimer called P-TEFb. P-TEFb forms a complex with AFF4/AF5Q31. Component of a complex which is at least composed of HTATSF1/Tat-SF1, P-TEFb complex, RNA pol II, SUPT5H, and NCL/nucleolin. Component of the 7SK snRNP complex at least composed of P-TEFb (composed of CDK9 and CCNT1/cyclin-T1), HEXIM1, HEXIM2, BCDIN3, SART3 proteins and 7SK and U6 snRNAs. Interacts (via central region) with ZMYND8 (via N-terminus); the interaction is direct and the association appears to occur between homodimeric ZMYND8 and the activated form of the P-TEFb complex. Interacts with BRD4, targets chromatin binding. Interacts with JMJD6. Interacts with MDFIC. Interacts with HSF1. Interacts with HTATSF1. Interacts with TBX21. As to quaternary structure, (Microbial infection) Interacts with the transactivation region of HIV-1, HIV-2 and SIV Tat. In terms of assembly, (Microbial infection) Interacts with human herpes virus 1 (HHV-1) transcriptional regulator ICP22. Post-translationally, ADP-ribosylation on serine residues by PARP1 in response to DNA damage disrupts the phase separation activity of CCNT1, thereby preventing activation of CDK9. Ubiquitously expressed.

It is found in the nucleus. Functionally, regulatory subunit of the cyclin-dependent kinase pair (CDK9/cyclin-T1) complex, also called positive transcription elongation factor B (P-TEFb), which facilitates the transition from abortive to productive elongation by phosphorylating the CTD (C-terminal domain) of the large subunit of RNA polymerase II (RNA Pol II). Required to activate the protein kinase activity of CDK9: acts by mediating formation of liquid-liquid phase separation (LLPS) that enhances binding of P-TEFb to the CTD of RNA Pol II. Its function is as follows. (Microbial infection) In case of HIV or SIV infections, binds to the transactivation domain of the viral nuclear transcriptional activator, Tat, thereby increasing Tat's affinity for the transactivating response RNA element (TAR RNA). Serves as an essential cofactor for Tat, by promoting RNA Pol II activation, allowing transcription of viral genes. The protein is Cyclin-T1 (CCNT1) of Homo sapiens (Human).